We begin with the raw amino-acid sequence, 1115 residues long: Integrin alpha-PS3 (1115 aa).

Positions 1 to 24 (MNAESTMFPHIFLALLALISHIEA) are cleaved as a signal peptide. Over 25–1054 (FNFMPRPSRV…PNIISKHQET (1030 aa)) the chain is Extracellular. FG-GAP repeat units follow at residues 39-99 (KHLK…VCSP), 113-174 (SEYT…STPQ), 193-246 (DNGN…VDNP), 278-335 (IPTP…GKSI), 336-397 (HKYH…FNFE), 398-453 (RQIL…GLRD), and 460-522 (DAPS…SESR). N-linked (GlcNAc...) asparagine glycosylation is found at N46, N82, and N166. The N-linked (GlcNAc...) asparagine glycan is linked to N438. Residues N696, N845, N868, and N964 are each glycosylated (N-linked (GlcNAc...) asparagine). The chain crosses the membrane as a helical span at residues 1055–1075 (GLPIWIIIVSVIGGLLLLSAI). Residues 1076-1115 (SYLLYKFGFFNRTKKDELDRLVQQNPVEPEAENLNSGGNN) lie on the Cytoplasmic side of the membrane.

This sequence belongs to the integrin alpha chain family. In terms of assembly, heterodimer of an alpha and a beta subunit. The alpha subunit is composed of a heavy and a light chain linked by a disulfide bond. Interacts with mys/beta-PS and Itgbn. In terms of tissue distribution, expressed in embryonic and larval hemocytes (at protein level). Expressed in tissues undergoing invagination, tissue movement and morphogenesis such as salivary gland, trachea, midgut endoderm, dorsal vessel, midline of the ventral nerve cord, amnioserosa and the amnioproctodeal invagination. Expressed in the mushroom body neuropil, brain areas that contain mushroom body processes in synaptic contact with other neurons. In egg chambers, expressed in border cells, in stretch cells and in dorsal appendage primordia.

It is found in the apical cell membrane. Its subcellular location is the lateral cell membrane. The protein localises to the cytoplasm. Functionally, integrin alpha-PS3/beta-PS is a receptor for laminin. Also binds to wb. Important during embryogenesis for the development of the trachea, dorsal vessel and salivary gland, as well as for dorsal closure. Required for short-term memory processes. Minor involvement in the establishment of the oocyte anterior-posterior length. Plays a role in timely border cell migration during oogenesis, probably mediated by JNK signaling. Integrin alpha-PS3/Itgbn is required for effective phagocytosis of apoptotic cells during embryonic development and for the phagocytic elimination of S.aureus by mediating the binding of S.aureus peptidoglycan to larval hemocytes, which probably activates a signaling pathway involving Rac1 and Rac2. Integrin alpha-PS3/Itgbn also regulates Fak activity during neuromuscular junction (NMJ) growth and is required for its activation in presynapsis of NMJs. Seems to be dispensable for major morphogenetic processes. The protein is Integrin alpha-PS3 (scb) of Drosophila melanogaster (Fruit fly).